A 314-amino-acid chain; its full sequence is tRNA pseudouridine synthase B (314 aa).

H43 lines the substrate pocket. The Nucleophile role is filled by D48. Y76, Y179, and L200 together coordinate substrate.

This sequence belongs to the pseudouridine synthase TruB family. Type 1 subfamily.

It catalyses the reaction uridine(55) in tRNA = pseudouridine(55) in tRNA. Responsible for synthesis of pseudouridine from uracil-55 in the psi GC loop of transfer RNAs. This Shigella dysenteriae serotype 1 (strain Sd197) protein is tRNA pseudouridine synthase B.